Consider the following 287-residue polypeptide: Inositol diphosphatase siw14 (287 aa).

The Tyrosine-protein phosphatase domain occupies 85-256; sequence NFGVVYPGII…LNDLKRYISD (172 aa). 2 positions are modified to phosphoserine: serine 156 and serine 159. The Phosphocysteine intermediate role is filled by cysteine 189.

This sequence belongs to the protein-tyrosine phosphatase family. Atypical dual-specificity phosphatase Siw14-like subfamily.

Its subcellular location is the cytoplasm. It is found in the nucleus. It carries out the reaction 5-diphospho-1D-myo-inositol 1,2,3,4,6-pentakisphosphate + H2O = 1D-myo-inositol hexakisphosphate + phosphate + H(+). The catalysed reaction is 1-diphospho-1D-myo-inositol 2,3,4,5,6-pentakisphosphate + H2O = 1D-myo-inositol hexakisphosphate + phosphate + H(+). The enzyme catalyses 1,5-bis(diphospho)-1D-myo-inositol 2,3,4,6-tetrakisphosphate + H2O = 1-diphospho-1D-myo-inositol 2,3,4,5,6-pentakisphosphate + phosphate + 2 H(+). Its activity is regulated as follows. Activity is inhibited by the reaction product inorganic phosphate and by sulfate (a phosphate mimetic). Not inhibited by magnesium. Cleaves the beta-phosphate at the 1- and 5-position of soluble inositol pyrophosphates. Has exopolyphosphatase activity in vitro but does not appear to contribute to the homeostasis of cellular polyphosphate. The protein is Inositol diphosphatase siw14 of Schizosaccharomyces pombe (strain 972 / ATCC 24843) (Fission yeast).